The following is a 269-amino-acid chain: Ribosomal RNA large subunit methyltransferase E (269 aa).

S-adenosyl-L-methionine is bound by residues Gly-48, Trp-50, Asp-68, Asp-86, and Asp-111. The active-site Proton acceptor is the Lys-151. Residues 198–256 (PVAAGDRIEVTVEERGDEGDGIAYVEGYSIFVSDADVGETVTVEVVDAKPRFGFATRVD) form the TRAM domain.

Belongs to the class I-like SAM-binding methyltransferase superfamily. RNA methyltransferase RlmE family.

The protein localises to the cytoplasm. It catalyses the reaction uridine(2552) in 23S rRNA + S-adenosyl-L-methionine = 2'-O-methyluridine(2552) in 23S rRNA + S-adenosyl-L-homocysteine + H(+). Its function is as follows. Specifically methylates the uridine in position 2552 of 23S rRNA at the 2'-O position of the ribose in the fully assembled 50S ribosomal subunit. In Halorubrum lacusprofundi (strain ATCC 49239 / DSM 5036 / JCM 8891 / ACAM 34), this protein is Ribosomal RNA large subunit methyltransferase E.